The sequence spans 183 residues: Probable actin-related protein 2/3 complex subunit 3 (183 aa).

It belongs to the ARPC3 family. Component of the Arp2/3 complex.

The protein resides in the cytoplasm. Its subcellular location is the cytoskeleton. Functions as a component of the Arp2/3 complex which is involved in regulation of actin polymerization and together with an activating nucleation-promoting factor (NPF) mediates the formation of branched actin networks. The chain is Probable actin-related protein 2/3 complex subunit 3 (arx-5) from Caenorhabditis elegans.